Reading from the N-terminus, the 1264-residue chain is Protein fantom (1264 aa).

4 coiled-coil regions span residues 64–143 (LKQH…LQVQ), 196–268 (YSNS…NVET), 299–454 (LRIS…ESDI), and 488–555 (NKDL…VHLL). 2 consecutive C2 domains span residues 577 to 714 (KQYK…FCTT) and 773 to 897 (AATT…SGIF). Disordered regions lie at residues 979–1018 (DTISHPSPETSPPPKDIKDSSPEVGPKPENGLSAVAYPSK) and 1047–1093 (QLAS…NTKQ). Residues 1056 to 1080 (SEDETEITEELEPEDEDRSASDSDD) are compositionally biased toward acidic residues.

This sequence belongs to the RPGRIP1 family. In terms of assembly, interacts with NPHP4 and NPHP1; NPHP1, NPHP4 and RPGRIP1L are proposed to form a functional NPHP1-4-8 module localized to cell-cell contacts and the ciliary transition zone; NPHP4 mediates the interaction between NPHP1 and RPGRIP1L. Interacts with IQCB1; the interaction likely requires additional interactors. Interacts with TBXA2R (via C-terminus), RPGR, NEK4. Interacts with NPHP4, INVS and DVL2; proposed to form a complex involved in DVL2 stabilization. Interacts with PSMD2. Ubiquitously expressed. Not found in heart and skin.

It is found in the cytoplasm. The protein resides in the cytoskeleton. The protein localises to the cilium basal body. It localises to the cilium axoneme. Its subcellular location is the microtubule organizing center. It is found in the centrosome. The protein resides in the cell junction. The protein localises to the tight junction. Negatively regulates signaling through the G-protein coupled thromboxane A2 receptor (TBXA2R). May be involved in mechanisms like programmed cell death, craniofacial development, patterning of the limbs, and formation of the left-right axis. Involved in the organization of apical junctions; the function is proposed to implicate a NPHP1-4-8 module. Does not seem to be strictly required for ciliogenesis. Involved in establishment of planar cell polarity such as in cochlear sensory epithelium and is proposed to implicate stabilization of disheveled proteins. Involved in regulation of proteasomal activity at the primary cilium probably implicating association with PSDM2. The sequence is that of Protein fantom (Rpgrip1l) from Mus musculus (Mouse).